The chain runs to 123 residues: uncharacterized protein (123 aa).

The interval 35-100 (SQDHGDDPAE…SSGAPASQHC (66 aa)) is disordered. Residues 37–48 (DHGDDPAERGRT) show a composition bias toward basic and acidic residues. Positions 85-97 (ALPASPSSGAPAS) are enriched in low complexity.

This is an uncharacterized protein from Homo sapiens (Human).